A 411-amino-acid chain; its full sequence is Tyrosine--tRNA ligase (411 aa).

The short motif at 50–59 (PTRPDLHLGH) is the 'HIGH' region element. The 'KMSKS' region motif lies at 236–240 (KMSKS). An ATP-binding site is contributed by Lys-239. The S4 RNA-binding domain occupies 345-409 (VSMAKLVVLA…GKDKFARLVL (65 aa)).

This sequence belongs to the class-I aminoacyl-tRNA synthetase family. TyrS type 2 subfamily. As to quaternary structure, homodimer.

It localises to the cytoplasm. The enzyme catalyses tRNA(Tyr) + L-tyrosine + ATP = L-tyrosyl-tRNA(Tyr) + AMP + diphosphate + H(+). In terms of biological role, catalyzes the attachment of tyrosine to tRNA(Tyr) in a two-step reaction: tyrosine is first activated by ATP to form Tyr-AMP and then transferred to the acceptor end of tRNA(Tyr). In Deinococcus radiodurans (strain ATCC 13939 / DSM 20539 / JCM 16871 / CCUG 27074 / LMG 4051 / NBRC 15346 / NCIMB 9279 / VKM B-1422 / R1), this protein is Tyrosine--tRNA ligase.